Consider the following 255-residue polypeptide: uncharacterized protein (255 aa).

The first 23 residues, 1-23, serve as a signal peptide directing secretion; that stretch reads MKRLNKLVLGIIFLFLVISITAG. A lipid anchor (N-palmitoyl cysteine) is attached at C24. C24 carries the S-diacylglycerol cysteine lipid modification.

Belongs to the staphylococcal tandem lipoprotein family.

Its subcellular location is the cell membrane. This is an uncharacterized protein from Staphylococcus aureus (strain USA300).